The primary structure comprises 83 residues: Defensin-like protein 194 (83 aa).

The first 27 residues, M1–A27, serve as a signal peptide directing secretion. 4 cysteine pairs are disulfide-bonded: C32/C78, C44/C68, C53/C73, and C57/C75.

Belongs to the DEFL family. Protease inhibitor I18 (RTI/MTI-2) subfamily.

It localises to the secreted. The polypeptide is Defensin-like protein 194 (ATTI3) (Arabidopsis thaliana (Mouse-ear cress)).